The following is a 106-amino-acid chain: UPF0145 protein Cthe_0398 (106 aa).

This sequence belongs to the UPF0145 family.

The protein is UPF0145 protein Cthe_0398 of Acetivibrio thermocellus (strain ATCC 27405 / DSM 1237 / JCM 9322 / NBRC 103400 / NCIMB 10682 / NRRL B-4536 / VPI 7372) (Clostridium thermocellum).